Reading from the N-terminus, the 95-residue chain is FXYD domain-containing ion transport regulator 6 (95 aa).

A signal peptide spans 1–18 (MELVLVFLCSLLAPMVLA). Residues 19-35 (STAEKEKEMDPFHYDYQ) lie on the Extracellular side of the membrane. The chain crosses the membrane as a helical span at residues 36-58 (TLRIGGLVFAVVLFSVGILLILS). Over 59-95 (RRCKCSFNQKPRAPGDEEAQVENLITANATEPQKAEN) the chain is Cytoplasmic.

It belongs to the FXYD family. As to quaternary structure, regulatory subunit of the sodium/potassium-transporting ATPase which is composed of a catalytic alpha subunit, a non-catalytic beta subunit and an additional regulatory subunit. The regulatory subunit, a member of the FXYD protein family, modulates the enzymatic activity in a tissue- and isoform-specific way by changing affinities of the Na+/K+-ATPase toward Na(+), K(+) or ATP.

It is found in the cell membrane. Functionally, associates with and regulates the activity of the sodium/potassium-transporting ATPase (NKA) which catalyzes the hydrolysis of ATP coupled with the exchange of Na(+) and K(+) ions across the plasma membrane. Reduces the apparent affinity for intracellular Na(+) with no change in the apparent affinity for extracellular K(+). In addition to modulating NKA kinetics, may also function as a regulator of NKA localization to the plasma membrane. In Macaca fascicularis (Crab-eating macaque), this protein is FXYD domain-containing ion transport regulator 6 (FXYD6).